Reading from the N-terminus, the 518-residue chain is Glutamate--cysteine ligase (518 aa).

It belongs to the glutamate--cysteine ligase type 1 family. Type 1 subfamily.

The catalysed reaction is L-cysteine + L-glutamate + ATP = gamma-L-glutamyl-L-cysteine + ADP + phosphate + H(+). Its pathway is sulfur metabolism; glutathione biosynthesis; glutathione from L-cysteine and L-glutamate: step 1/2. This Shigella sonnei (strain Ss046) protein is Glutamate--cysteine ligase.